We begin with the raw amino-acid sequence, 148 residues long: RING finger protein 24 (148 aa).

A helical membrane pass occupies residues isoleucine 24 to cysteine 44. An RING-type zinc finger spans residues cysteine 78 to asparagine 119.

As to quaternary structure, interacts with TRPC1, TRPC3, TRPC4, TRPC5, TRPC6 and TRPC7.

It is found in the golgi apparatus membrane. Functionally, may play a role in TRPCs intracellular trafficking. This chain is RING finger protein 24 (RNF24), found in Homo sapiens (Human).